The sequence spans 500 residues: Cytochrome P450 2D14 (500 aa).

Cysteine 446 is a binding site for heme.

This sequence belongs to the cytochrome P450 family. Heme is required as a cofactor.

It is found in the endoplasmic reticulum membrane. Its subcellular location is the microsome membrane. The enzyme catalyses an organic molecule + reduced [NADPH--hemoprotein reductase] + O2 = an alcohol + oxidized [NADPH--hemoprotein reductase] + H2O + H(+). Its function is as follows. Cytochromes P450 are a group of heme-thiolate monooxygenases. In liver microsomes, this enzyme is involved in an NADPH-dependent electron transport pathway. It oxidizes a variety of structurally unrelated compounds, including steroids, fatty acids, and xenobiotics. This is Cytochrome P450 2D14 (CYP2D14) from Bos taurus (Bovine).